The sequence spans 339 residues: 4-hydroxy-2-oxovalerate aldolase 3 (339 aa).

Residues 7–259 (IRVTDTSLRD…KTGIDFFAIA (253 aa)) enclose the Pyruvate carboxyltransferase domain. 15–16 (RD) contacts substrate. Residue Asp-16 coordinates Mn(2+). The Proton acceptor role is filled by His-19. The substrate site is built by Ser-169 and His-198. His-198 and His-200 together coordinate Mn(2+). Tyr-289 contributes to the substrate binding site.

This sequence belongs to the 4-hydroxy-2-oxovalerate aldolase family.

The catalysed reaction is (S)-4-hydroxy-2-oxopentanoate = acetaldehyde + pyruvate. This chain is 4-hydroxy-2-oxovalerate aldolase 3 (hsaF), found in Rhodococcus jostii (strain RHA1).